Consider the following 104-residue polypeptide: Protein U9 (104 aa).

The protein is Protein U9 (U9) of Homo sapiens (Human).